The primary structure comprises 526 residues: MDTESTYSGYSYYSSHSKKSHRQGERTRERHKSPRNKDGRGSEKSVTIQAPAGEPLLANDSARTGAEEVQDDNWGETTTAITGTSEHSISQEDIARISKDMEDSVGLDCKRYLGLTVASFLGLLVFLTPIAFILLPQILWREELKPCGAICEGLLISVSFKLLILLIGTWALFFRKQRADVPRVFVFRALLLVLIFLFVVSYWLFYGVRILDSRDQNYKDIVQYAVSLVDALLFIHYLAIVLLELRQLQPMFTLQVVRSTDGESRFYSLGHLSIQRAALVVLENYYKDFTIYNPNLLTASKFRAAKHMAGLKVYNVDGPSNNATGQSRAMIAAAARRRDSSHNELYYEEAEHERRVKKRRARLVVAVEEAFIHIQRLQAEEQQKSPGEVMDPREAAQAIFPSMARALQKYLRTTRQQHYHSMESILQHLAFCITNSMTPKAFLERYLSAGPTLQYDKDRWLSTQWRLISEEAVTNGLRDGIVFVLKCLDFSLVVNVKKIPFIVLSEEFIDPKSHKFVLRLQSETSV.

Over residues 1-15 (MDTESTYSGYSYYSS) the composition is skewed to low complexity. The tract at residues 1 to 87 (MDTESTYSGY…TTAITGTSEH (87 aa)) is disordered. The Cytoplasmic segment spans residues 1–114 (MDTESTYSGY…VGLDCKRYLG (114 aa)). Positions 75–87 (GETTTAITGTSEH) are enriched in polar residues. 2 positions are modified to phosphoserine: Ser88 and Ser90. A helical membrane pass occupies residues 115 to 135 (LTVASFLGLLVFLTPIAFILL). At 136 to 153 (PQILWREELKPCGAICEG) the chain is on the extracellular side. A helical transmembrane segment spans residues 154 to 174 (LLISVSFKLLILLIGTWALFF). Residues 175–184 (RKQRADVPRV) lie on the Cytoplasmic side of the membrane. Residues 185–205 (FVFRALLLVLIFLFVVSYWLF) form a helical membrane-spanning segment. Residues 206-224 (YGVRILDSRDQNYKDIVQY) are Extracellular-facing. Residues 225-245 (AVSLVDALLFIHYLAIVLLEL) traverse the membrane as a helical segment. The Cytoplasmic portion of the chain corresponds to 246 to 526 (RQLQPMFTLQ…VLRLQSETSV (281 aa)).

Belongs to the Vang family. As to quaternary structure, heterodimer with Vangl2. Interacts through its C-terminal region with the N-terminal half of DVL1, DVL2 and DVL3. The PDZ domain of DVL1, DVL2 and DVL3 is required for the interaction.

The protein resides in the cell membrane. This is Vang-like protein 1 (Vangl1) from Mus musculus (Mouse).